The chain runs to 222 residues: 2-C-methyl-D-erythritol 4-phosphate cytidylyltransferase (222 aa).

It belongs to the IspD/TarI cytidylyltransferase family. IspD subfamily.

The catalysed reaction is 2-C-methyl-D-erythritol 4-phosphate + CTP + H(+) = 4-CDP-2-C-methyl-D-erythritol + diphosphate. It functions in the pathway isoprenoid biosynthesis; isopentenyl diphosphate biosynthesis via DXP pathway; isopentenyl diphosphate from 1-deoxy-D-xylulose 5-phosphate: step 2/6. Its function is as follows. Catalyzes the formation of 4-diphosphocytidyl-2-C-methyl-D-erythritol from CTP and 2-C-methyl-D-erythritol 4-phosphate (MEP). This Thermotoga sp. (strain RQ2) protein is 2-C-methyl-D-erythritol 4-phosphate cytidylyltransferase.